Here is a 246-residue protein sequence, read N- to C-terminus: MSTSAADTLSRPSGRAVDALRPFSLERGFTRYAEGSVLVRAGNTHVLCTASVLEKVPPFLKGRGEGWVTAEYGMLPRATHTRGDREAARGKQSGRTQEIQRLIGRSLRAVFDLRLLGERTLHLDCDVLQADGGTRCASITGAWVAAADAVALLMQRGDLAHNPIRDAVAAVSVGLVDGRAVLDLDYQEDSACAADVNVVMTGSGAFVEVQGTGEGATFTRGELDTMLGLAEGGIAQLVRAQREALQ.

Phosphate is bound by residues R95 and 133–135 (GTR).

This sequence belongs to the RNase PH family. Homohexameric ring arranged as a trimer of dimers.

It catalyses the reaction tRNA(n+1) + phosphate = tRNA(n) + a ribonucleoside 5'-diphosphate. In terms of biological role, phosphorolytic 3'-5' exoribonuclease that plays an important role in tRNA 3'-end maturation. Removes nucleotide residues following the 3'-CCA terminus of tRNAs; can also add nucleotides to the ends of RNA molecules by using nucleoside diphosphates as substrates, but this may not be physiologically important. Probably plays a role in initiation of 16S rRNA degradation (leading to ribosome degradation) during starvation. This chain is Ribonuclease PH, found in Bordetella bronchiseptica (strain ATCC BAA-588 / NCTC 13252 / RB50) (Alcaligenes bronchisepticus).